Reading from the N-terminus, the 341-residue chain is S-adenosylmethionine:tRNA ribosyltransferase-isomerase (341 aa).

Belongs to the QueA family. In terms of assembly, monomer.

It is found in the cytoplasm. The enzyme catalyses 7-aminomethyl-7-carbaguanosine(34) in tRNA + S-adenosyl-L-methionine = epoxyqueuosine(34) in tRNA + adenine + L-methionine + 2 H(+). Its pathway is tRNA modification; tRNA-queuosine biosynthesis. In terms of biological role, transfers and isomerizes the ribose moiety from AdoMet to the 7-aminomethyl group of 7-deazaguanine (preQ1-tRNA) to give epoxyqueuosine (oQ-tRNA). The chain is S-adenosylmethionine:tRNA ribosyltransferase-isomerase from Halothermothrix orenii (strain H 168 / OCM 544 / DSM 9562).